We begin with the raw amino-acid sequence, 135 residues long: uncharacterized protein (135 aa).

This is an uncharacterized protein from Rickettsia prowazekii (strain Madrid E).